The sequence spans 413 residues: Hibernation-specific plasma protein HP-55 (413 aa).

Residues 1–24 (MPSSISWGLLLLAALSCLGPGSLA) form the signal peptide. Gln-25 is subject to Pyrrolidone carboxylic acid. N-linked (GlcNAc...) asparagine glycans are attached at residues Asn-65, Asn-102, Asn-165, and Asn-266. An RCL region spans residues 368–387 (GGTVLGAEAMLQAPIMKFDR).

It belongs to the serpin family. In terms of assembly, plasma proteins HP-20, HP-25, HP-27 and HP-55 form a 140 kDa complex via disulfide bonds in the plasma. The N-terminus is blocked. In terms of tissue distribution, plasma; synthesized in the liver.

It is found in the secreted. Its function is as follows. Protease inhibitor. The chain is Hibernation-specific plasma protein HP-55 from Tamias sibiricus (Siberian chipmunk).